A 274-amino-acid polypeptide reads, in one-letter code: 2,3,4,5-tetrahydropyridine-2,6-dicarboxylate N-succinyltransferase (274 aa).

2 residues coordinate substrate: Arg-106 and Asp-143.

The protein belongs to the transferase hexapeptide repeat family. Homotrimer.

The protein localises to the cytoplasm. It carries out the reaction (S)-2,3,4,5-tetrahydrodipicolinate + succinyl-CoA + H2O = (S)-2-succinylamino-6-oxoheptanedioate + CoA. The protein operates within amino-acid biosynthesis; L-lysine biosynthesis via DAP pathway; LL-2,6-diaminopimelate from (S)-tetrahydrodipicolinate (succinylase route): step 1/3. This is 2,3,4,5-tetrahydropyridine-2,6-dicarboxylate N-succinyltransferase from Paracidovorax citrulli (strain AAC00-1) (Acidovorax citrulli).